The chain runs to 147 residues: Ribonuclease H (147 aa).

Positions 1–142 (MAGKVVMYTD…ADELANRGVR (142 aa)) constitute an RNase H type-1 domain. Aspartate 10, glutamate 48, aspartate 70, and aspartate 134 together coordinate Mg(2+).

The protein belongs to the RNase H family. Monomer. Requires Mg(2+) as cofactor.

It is found in the cytoplasm. It carries out the reaction Endonucleolytic cleavage to 5'-phosphomonoester.. Endonuclease that specifically degrades the RNA of RNA-DNA hybrids. The chain is Ribonuclease H from Marinobacter nauticus (strain ATCC 700491 / DSM 11845 / VT8) (Marinobacter aquaeolei).